The following is a 372-amino-acid chain: uncharacterized protein (372 aa).

S-adenosyl-L-methionine is bound by residues aspartate 202 and 227 to 229; that span reads GDF.

The protein belongs to the class I-like SAM-binding methyltransferase superfamily. Cation-independent O-methyltransferase family.

This is an uncharacterized protein from Methanocaldococcus jannaschii (strain ATCC 43067 / DSM 2661 / JAL-1 / JCM 10045 / NBRC 100440) (Methanococcus jannaschii).